We begin with the raw amino-acid sequence, 252 residues long: Thiazole synthase (252 aa).

The active-site Schiff-base intermediate with DXP is lysine 98. 1-deoxy-D-xylulose 5-phosphate is bound by residues glycine 159, 185 to 186, and 207 to 208; these read AG and AT.

The protein belongs to the ThiG family. In terms of assembly, homotetramer. Forms heterodimers with either ThiH or ThiS.

Its subcellular location is the cytoplasm. It carries out the reaction [ThiS sulfur-carrier protein]-C-terminal-Gly-aminoethanethioate + 2-iminoacetate + 1-deoxy-D-xylulose 5-phosphate = [ThiS sulfur-carrier protein]-C-terminal Gly-Gly + 2-[(2R,5Z)-2-carboxy-4-methylthiazol-5(2H)-ylidene]ethyl phosphate + 2 H2O + H(+). It functions in the pathway cofactor biosynthesis; thiamine diphosphate biosynthesis. In terms of biological role, catalyzes the rearrangement of 1-deoxy-D-xylulose 5-phosphate (DXP) to produce the thiazole phosphate moiety of thiamine. Sulfur is provided by the thiocarboxylate moiety of the carrier protein ThiS. In vitro, sulfur can be provided by H(2)S. This Mycobacterium avium (strain 104) protein is Thiazole synthase.